A 245-amino-acid polypeptide reads, in one-letter code: 5'-nucleotidase SurE (245 aa).

A divalent metal cation-binding residues include D8, D9, S39, and N91.

The protein belongs to the SurE nucleotidase family. The cofactor is a divalent metal cation.

The protein resides in the cytoplasm. The enzyme catalyses a ribonucleoside 5'-phosphate + H2O = a ribonucleoside + phosphate. Nucleotidase that shows phosphatase activity on nucleoside 5'-monophosphates. The polypeptide is 5'-nucleotidase SurE (Psychromonas ingrahamii (strain DSM 17664 / CCUG 51855 / 37)).